Here is a 386-residue protein sequence, read N- to C-terminus: tRNA N6-adenosine threonylcarbamoyltransferase (386 aa).

Residues H112 and H116 each contribute to the Fe cation site. Substrate is bound by residues 134 to 138 (LASGG), D167, G180, and N322. Residue D350 participates in Fe cation binding.

It belongs to the KAE1 / TsaD family. The cofactor is Fe(2+).

The protein localises to the cytoplasm. The enzyme catalyses L-threonylcarbamoyladenylate + adenosine(37) in tRNA = N(6)-L-threonylcarbamoyladenosine(37) in tRNA + AMP + H(+). Functionally, required for the formation of a threonylcarbamoyl group on adenosine at position 37 (t(6)A37) in tRNAs that read codons beginning with adenine. Is involved in the transfer of the threonylcarbamoyl moiety of threonylcarbamoyl-AMP (TC-AMP) to the N6 group of A37, together with TsaE and TsaB. TsaD likely plays a direct catalytic role in this reaction. This chain is tRNA N6-adenosine threonylcarbamoyltransferase, found in Rickettsia akari (strain Hartford).